Reading from the N-terminus, the 1159-residue chain is WASH complex subunit 5 (1159 aa).

Belongs to the strumpellin family. In terms of assembly, component of the WASH complex.

Its subcellular location is the early endosome. Acts at least in part as component of the WASH complex which seems to regulate washc1 nucleation-promoting factor (NPF) activity and is required for its membrane targeting during endosomal sorting. This Danio rerio (Zebrafish) protein is WASH complex subunit 5.